Here is a 596-residue protein sequence, read N- to C-terminus: MSVQEVNTHAVLPPIVSRNDKEFLESIQRYITTETKRVGCKEEGPADEYYTIYRNVFDKFSATDRKIIFQVIDYVSAYKSILTAIKKEYDAFIETIKKGRRTAFYLHGKLKVLAKEPTALVYHQRRAIQLEAKMRIIENNSTAIQLQIDQMKQLRMEYDKKEVKLCAPSRQLWKPIPGMTLQDSVNLEALNKHKQYLEDKYIKLKQDMSTMYVPAQKKAELDEEMVVLLNRRDIAENLKKDRQFRHQRLQVISHTLTPWMKQNMRISFQDVMERIRKTKAIYGYDNIVDEIFEDDPNKKKEAIVMLHYIERFNDLISLGEYERAACFAANSPKRILQNTSTMNKFKAIGKIRGKPLPLLLFFEAIFNTSQAFKRPINADLTMEGIKCGLSEERLDLVTHWVTQEKLTFSEKAGDIIFAYGEQHTYHKPRCLALAQIIYNECGLHRKALLCLCKQGQIHEAMEHIQQSKDINTDDLIQLITACPQIDLIRCLTQERNEKPPFLSFGLAVLHMFSVDMKKVGMRLLQEVSKGEKDVIEHLVMSDLFCSLEKWQEIANICLQNGFKILFNDIMSILRSQAGVSEISEDDTTNIMEHVFW.

A coiled-coil region spans residues 129–241 (QLEAKMRIIE…RDIAENLKKD (113 aa)).

The chain is Clathrin heavy chain linker domain-containing protein 1 (Clhc1) from Mus musculus (Mouse).